The chain runs to 64 residues: Large ribosomal subunit protein bL28 (64 aa).

The segment at 1–23 (MARKDQISHRGPLSGNNRSHALN) is disordered.

It belongs to the bacterial ribosomal protein bL28 family.

This is Large ribosomal subunit protein bL28 from Mesomycoplasma hyopneumoniae (strain J / ATCC 25934 / NCTC 10110) (Mycoplasma hyopneumoniae).